A 177-amino-acid chain; its full sequence is Translation initiation factor IF-3 (177 aa).

Belongs to the IF-3 family. As to quaternary structure, monomer.

It localises to the cytoplasm. Its function is as follows. IF-3 binds to the 30S ribosomal subunit and shifts the equilibrium between 70S ribosomes and their 50S and 30S subunits in favor of the free subunits, thus enhancing the availability of 30S subunits on which protein synthesis initiation begins. This Acaryochloris marina (strain MBIC 11017) protein is Translation initiation factor IF-3.